Reading from the N-terminus, the 481-residue chain is uncharacterized protein (481 aa).

Positions 1–28 (MPQSNHYSHQSRSHNDRRRQQPDEKVQA) are disordered. Residues 29 to 87 (TVNIGQRFPLTIRRLGINGEGIGYYKHVITFVKGALPEEVVVAEVTAVHPRYLEAKIRS) enclose the TRAM domain. Residues Gln-313, Tyr-342, Asp-363, and Asp-411 each coordinate S-adenosyl-L-methionine. Cys-438 functions as the Nucleophile in the catalytic mechanism.

It belongs to the class I-like SAM-binding methyltransferase superfamily. RNA M5U methyltransferase family.

This is an uncharacterized protein from Lactiplantibacillus plantarum (strain ATCC BAA-793 / NCIMB 8826 / WCFS1) (Lactobacillus plantarum).